Reading from the N-terminus, the 145-residue chain is Large-conductance mechanosensitive channel (145 aa).

Helical transmembrane passes span Val-14–Leu-34, Leu-38–Pro-58, and Gly-81–Val-101.

Belongs to the MscL family. As to quaternary structure, homopentamer.

Its subcellular location is the cell inner membrane. Functionally, channel that opens in response to stretch forces in the membrane lipid bilayer. May participate in the regulation of osmotic pressure changes within the cell. The chain is Large-conductance mechanosensitive channel from Rhizobium etli (strain CIAT 652).